A 50-amino-acid chain; its full sequence is Photosystem II reaction center protein M (50 aa).

Residues 7–27 form a helical membrane-spanning segment; it reads GFIASLLFVGVPTIFLIGLFI.

Belongs to the PsbM family. As to quaternary structure, PSII is composed of 1 copy each of membrane proteins PsbA, PsbB, PsbC, PsbD, PsbE, PsbF, PsbH, PsbI, PsbJ, PsbK, PsbL, PsbM, PsbT, PsbX, PsbY, Psb30/Ycf12, peripheral proteins PsbO, CyanoQ (PsbQ), PsbU, PsbV and a large number of cofactors. It forms dimeric complexes.

Its subcellular location is the cellular thylakoid membrane. In terms of biological role, one of the components of the core complex of photosystem II (PSII). PSII is a light-driven water:plastoquinone oxidoreductase that uses light energy to abstract electrons from H(2)O, generating O(2) and a proton gradient subsequently used for ATP formation. It consists of a core antenna complex that captures photons, and an electron transfer chain that converts photonic excitation into a charge separation. This subunit is found at the monomer-monomer interface. The protein is Photosystem II reaction center protein M of Prochlorococcus marinus (strain MIT 9312).